A 411-amino-acid chain; its full sequence is Stearoyl-[acyl-carrier-protein] 9-desaturase 2, chloroplastic (411 aa).

The transit peptide at Met-1 to Val-44 directs the protein to the chloroplast. Residues Glu-148, Glu-186, His-189, Glu-239, Glu-272, and His-275 each contribute to the Fe cation site.

Belongs to the fatty acid desaturase type 2 family. Homodimer. Fe(2+) is required as a cofactor. In terms of tissue distribution, preferentially expressed in roots and flowers.

It is found in the plastid. The protein resides in the chloroplast. The catalysed reaction is octadecanoyl-[ACP] + 2 reduced [2Fe-2S]-[ferredoxin] + O2 + 2 H(+) = (9Z)-octadecenoyl-[ACP] + 2 oxidized [2Fe-2S]-[ferredoxin] + 2 H2O. It functions in the pathway lipid metabolism; fatty acid metabolism. In terms of biological role, converts stearoyl-ACP to oleoyl-ACP by introduction of a cis double bond between carbons 9 and 10 of the acyl chain. Exhibits delta-9 palmitoyl-[acyl-carrier-protein] desaturase (PAD) activity. Involved in omega-7 monounsaturated fatty acid biosynthesis, especially in the endosperm oil. This Arabidopsis thaliana (Mouse-ear cress) protein is Stearoyl-[acyl-carrier-protein] 9-desaturase 2, chloroplastic (S-ACP-DES2).